Consider the following 293-residue polypeptide: MEKGTFQIKTGFAEMFKGGVIMDVTTPEQAVIAEEAGAVAVMALERVPADIRAQGGVARMSDPKIIKEIMAAVSIPVMAKVRIGHFVEAMILEAIGVDFIDESEVLTPADEEHHIDKWKFKVPFVCGARNLGEALRRIAEGAAMIRTKGEAGTGNVVEAVRHARTMWKEIRYVQSLREDELMAYAKEIGAPFELVKWVHDHGRLPVVNFAAGGIATPADAALMMHLGMDGVFVGSGIFKSGDPRKRARAIVRAVAHYNDPEVLAEVSEDLGEPMVGINLDQLKEEERLAKRGW.

Position 23 (aspartate 23) interacts with D-ribose 5-phosphate. Lysine 80 (schiff-base intermediate with D-ribose 5-phosphate) is an active-site residue. Glycine 152 provides a ligand contact to D-ribose 5-phosphate. Arginine 164 is a binding site for D-glyceraldehyde 3-phosphate. Residues glycine 213 and 234 to 235 each bind D-ribose 5-phosphate; that span reads GS.

This sequence belongs to the PdxS/SNZ family. In the presence of PdxT, forms a dodecamer of heterodimers.

The catalysed reaction is aldehydo-D-ribose 5-phosphate + D-glyceraldehyde 3-phosphate + L-glutamine = pyridoxal 5'-phosphate + L-glutamate + phosphate + 3 H2O + H(+). Its pathway is cofactor biosynthesis; pyridoxal 5'-phosphate biosynthesis. Functionally, catalyzes the formation of pyridoxal 5'-phosphate from ribose 5-phosphate (RBP), glyceraldehyde 3-phosphate (G3P) and ammonia. The ammonia is provided by the PdxT subunit. Can also use ribulose 5-phosphate and dihydroxyacetone phosphate as substrates, resulting from enzyme-catalyzed isomerization of RBP and G3P, respectively. The protein is Pyridoxal 5'-phosphate synthase subunit PdxS of Thermus thermophilus (strain ATCC 27634 / DSM 579 / HB8).